Consider the following 156-residue polypeptide: MKIQLIAVGTKMPKWVEEGYKEYSRRFPKDMPLELVEITAGKRGKNADITRILQKEGEAMLAAVPKGNRIVTLDIPGKRWDTEQLAEQLEAWKLDARDVSILIGGPEGLAPACKAAADQSWSLSPLTLPHPLVRVVMAESLYRAWSITANHPYHRE.

S-adenosyl-L-methionine-binding positions include leucine 73, glycine 104, and 123 to 128 (LSPLTL).

This sequence belongs to the RNA methyltransferase RlmH family. Homodimer.

The protein localises to the cytoplasm. It carries out the reaction pseudouridine(1915) in 23S rRNA + S-adenosyl-L-methionine = N(3)-methylpseudouridine(1915) in 23S rRNA + S-adenosyl-L-homocysteine + H(+). Functionally, specifically methylates the pseudouridine at position 1915 (m3Psi1915) in 23S rRNA. This is Ribosomal RNA large subunit methyltransferase H from Aliivibrio fischeri (strain MJ11) (Vibrio fischeri).